The sequence spans 466 residues: UDP-N-acetylmuramate--L-alanine ligase (466 aa).

Residue 117-123 (GTHGKTT) participates in ATP binding.

The protein belongs to the MurCDEF family.

The protein localises to the cytoplasm. It catalyses the reaction UDP-N-acetyl-alpha-D-muramate + L-alanine + ATP = UDP-N-acetyl-alpha-D-muramoyl-L-alanine + ADP + phosphate + H(+). The protein operates within cell wall biogenesis; peptidoglycan biosynthesis. In terms of biological role, cell wall formation. This Streptomyces griseus subsp. griseus (strain JCM 4626 / CBS 651.72 / NBRC 13350 / KCC S-0626 / ISP 5235) protein is UDP-N-acetylmuramate--L-alanine ligase.